The following is a 903-amino-acid chain: FIGNL1-interacting regulator of recombination and mitosis (903 aa).

Residues S101 and S795 each carry the phosphoserine modification. K843 is modified (N6-acetyllysine).

As to quaternary structure, interacts (via its N-terminal region) with PLK1; controls PLK1 kinase activity. Interacts (via the KVVXF motif) with PPP1CC; controls PLK1 kinase activity. Interacts with FIGNL1; may regulate homologous recombination. Phosphorylation at Ser-101 by PLK1 strengthens FIRRM-PLK1 interaction. Phosphorylation at Ser-795 by PLK1 negatively regulates its interaction with PPP1CC.

The protein resides in the chromosome. The protein localises to the centromere. Its subcellular location is the kinetochore. It is found in the nucleus. It localises to the midbody. The protein resides in the cytoplasm. The protein localises to the cytoskeleton. Its subcellular location is the spindle. Its function is as follows. Regulates PLK1 kinase activity at kinetochores and promotes faithful chromosome segregation in prometaphase by bridging kinase and phosphatase activities. Phosphorylation of FIRRM by PLK1 negatively regulates its interaction with the phosphatase, PPP1CC, thus creating a negative feedback loop for maintaining proper PLK1 kinase activity during mitosis. In complex with FIGL1 may regulate homologous recombination. The sequence is that of FIGNL1-interacting regulator of recombination and mitosis from Mus musculus (Mouse).